Consider the following 900-residue polypeptide: Methionine--tRNA ligase, cytoplasmic (900 aa).

The GST C-terminal domain maps to Gly-74–Leu-198. Residues Pro-273 to Asn-283 carry the 'HIGH' region motif. The short motif at Lys-593–Ser-597 is the 'KMSKS' region element. Residue Lys-596 participates in ATP binding. Ser-825 is modified (phosphoserine). Thr-835 carries the phosphothreonine modification. Residues Gln-841–Lys-897 enclose the WHEP-TRS domain.

It belongs to the class-I aminoacyl-tRNA synthetase family. As to quaternary structure, monomer. Part of a multisubunit complex that groups tRNA ligases for Arg (RARS1), Asp (DARS1), Gln (QARS1), Ile (IARS1), Leu (LARS1), Lys (KARS1), Met (MARS1) the bifunctional ligase for Glu and Pro (EPRS1) and the auxiliary subunits AIMP1/p43, AIMP2/p38 and EEF1E1/p18. Forms a linear complex that contains MARS1, EEF1E1, EPRS1 and AIMP2 that is at the core of the multisubunit complex.

Its subcellular location is the cytoplasm. The protein localises to the cytosol. It is found in the nucleus. The protein resides in the nucleolus. It carries out the reaction tRNA(Met) + L-methionine + ATP = L-methionyl-tRNA(Met) + AMP + diphosphate. With respect to regulation, enzyme activity is increased by spermidine, EEF1A1, and when the Mg(2+) concentration is increased from 5 mM to 13 mM (in vitro), possibly by promoting the dissociation of the complex between the enzyme and its product. Functionally, catalyzes the specific attachment of an amino acid to its cognate tRNA in a 2 step reaction: the amino acid (AA) is first activated by ATP to form AA-AMP and then transferred to the acceptor end of the tRNA. Plays a role in the synthesis of ribosomal RNA in the nucleolus. The chain is Methionine--tRNA ligase, cytoplasmic from Homo sapiens (Human).